Reading from the N-terminus, the 259-residue chain is Aspartate/glutamate leucyltransferase (259 aa).

This sequence belongs to the R-transferase family. Bpt subfamily.

It localises to the cytoplasm. The catalysed reaction is N-terminal L-glutamyl-[protein] + L-leucyl-tRNA(Leu) = N-terminal L-leucyl-L-glutamyl-[protein] + tRNA(Leu) + H(+). It catalyses the reaction N-terminal L-aspartyl-[protein] + L-leucyl-tRNA(Leu) = N-terminal L-leucyl-L-aspartyl-[protein] + tRNA(Leu) + H(+). Its function is as follows. Functions in the N-end rule pathway of protein degradation where it conjugates Leu from its aminoacyl-tRNA to the N-termini of proteins containing an N-terminal aspartate or glutamate. The protein is Aspartate/glutamate leucyltransferase of Rhizobium meliloti (strain 1021) (Ensifer meliloti).